Reading from the N-terminus, the 526-residue chain is Peptide chain release factor 3 (526 aa).

Residues 9–277 enclose the tr-type G domain; the sequence is DKRRTFAIIS…GIVEWAPRPQ (269 aa). GTP is bound by residues 18-25, 86-90, and 140-143; these read SHPDAGKT, DTPGH, and NKLD.

This sequence belongs to the TRAFAC class translation factor GTPase superfamily. Classic translation factor GTPase family. PrfC subfamily.

The protein localises to the cytoplasm. Functionally, increases the formation of ribosomal termination complexes and stimulates activities of RF-1 and RF-2. It binds guanine nucleotides and has strong preference for UGA stop codons. It may interact directly with the ribosome. The stimulation of RF-1 and RF-2 is significantly reduced by GTP and GDP, but not by GMP. The protein is Peptide chain release factor 3 of Shewanella loihica (strain ATCC BAA-1088 / PV-4).